The primary structure comprises 414 residues: MYHRHLLVEQTDPELFAAIEAENARQEQHIELIASENYASPAVMWAQGTQLTNKYAEGYPGKRYYGGCEHVDVAEQLAIDRVKKLFGAEAANVQPHCGASANEAVFLAFLKPGDTIMGMSLAEGGHLTHGMSLNMSGKWFNAVSYGLDADEVIDYEAMEKKAHATRPRLIIAGASAYSLHIDFARFAQVAKDVGAIFMVDMAHYAGLIAAGLYPNPVPHADVVTSTTHKSLRGPRGGIILMRAAHEKAIHSAIFPGLQGGPLMHVIAAKAVAFQEALQPGFRLYQEQVLKNAKVLAQTLAARGLRIVSGGTQSHMMLVDLRAKGITGKEAEAVLGAAHMTINKNAIPNDPEKPMVTSGVRIGTPAMTTRGFKEEQARSTAELIADLLDKPRDAANIAAVRAKVDALTARFPVYG.

(6S)-5,6,7,8-tetrahydrofolate is bound by residues Leu121 and 125–127 (GHL). Position 229 is an N6-(pyridoxal phosphate)lysine (Lys229).

It belongs to the SHMT family. As to quaternary structure, homodimer. The cofactor is pyridoxal 5'-phosphate.

The protein resides in the cytoplasm. It catalyses the reaction (6R)-5,10-methylene-5,6,7,8-tetrahydrofolate + glycine + H2O = (6S)-5,6,7,8-tetrahydrofolate + L-serine. It functions in the pathway one-carbon metabolism; tetrahydrofolate interconversion. It participates in amino-acid biosynthesis; glycine biosynthesis; glycine from L-serine: step 1/1. Catalyzes the reversible interconversion of serine and glycine with tetrahydrofolate (THF) serving as the one-carbon carrier. This reaction serves as the major source of one-carbon groups required for the biosynthesis of purines, thymidylate, methionine, and other important biomolecules. Also exhibits THF-independent aldolase activity toward beta-hydroxyamino acids, producing glycine and aldehydes, via a retro-aldol mechanism. The sequence is that of Serine hydroxymethyltransferase from Verminephrobacter eiseniae (strain EF01-2).